The chain runs to 310 residues: Glycine-rich RNA-binding protein RZ1C (310 aa).

Positions Ser-7 to Pro-85 constitute an RRM domain. Ser-15 is subject to Phosphoserine. The tract at residues Arg-82–Gly-120 is disordered. The segment covering Ala-83–Arg-101 has biased composition (basic and acidic residues). Residues Gly-111–Gly-120 are compositionally biased toward gly residues. The CCHC-type zinc-finger motif lies at Cys-128–Ser-143. The disordered stretch occupies residues Arg-224–Tyr-310. 2 stretches are compositionally biased toward basic and acidic residues: residues Ala-226 to Asp-236 and Asp-244 to Ile-253. Positions Arg-261–Gly-273 are enriched in gly residues. The residue at position 295 (Ser-295) is a Phosphoserine.

In terms of tissue distribution, expressed in roots, rosette and cauline leaves, stems, floral buds and flowers.

The protein localises to the nucleus. Its function is as follows. Binds RNA and DNA sequences non-specifically. May be involved in tolerance to cold stress. The polypeptide is Glycine-rich RNA-binding protein RZ1C (Arabidopsis thaliana (Mouse-ear cress)).